We begin with the raw amino-acid sequence, 405 residues long: L-carnitine CoA-transferase (405 aa).

CoA is bound by residues Lys-97 and Arg-104. Asp-169 acts as the Nucleophile in catalysis.

The protein belongs to the CoA-transferase III family. CaiB subfamily. As to quaternary structure, homodimer.

It is found in the cytoplasm. It carries out the reaction crotonobetainyl-CoA + (R)-carnitine = crotonobetaine + (R)-carnitinyl-CoA. The enzyme catalyses 4-(trimethylamino)butanoyl-CoA + (R)-carnitine = (R)-carnitinyl-CoA + 4-(trimethylamino)butanoate. Its pathway is amine and polyamine metabolism; carnitine metabolism. Its function is as follows. Catalyzes the reversible transfer of the CoA moiety from gamma-butyrobetainyl-CoA to L-carnitine to generate L-carnitinyl-CoA and gamma-butyrobetaine. Is also able to catalyze the reversible transfer of the CoA moiety from gamma-butyrobetainyl-CoA or L-carnitinyl-CoA to crotonobetaine to generate crotonobetainyl-CoA. This is L-carnitine CoA-transferase from Escherichia coli O7:K1 (strain IAI39 / ExPEC).